A 214-amino-acid polypeptide reads, in one-letter code: Large ribosomal subunit protein uL1 (214 aa).

It belongs to the universal ribosomal protein uL1 family. In terms of assembly, part of the 50S ribosomal subunit.

Its function is as follows. Binds directly to 23S rRNA. Probably involved in E site tRNA release. Protein L1 is also a translational repressor protein, it controls the translation of its operon by binding to its mRNA. The protein is Large ribosomal subunit protein uL1 of Methanoregula boonei (strain DSM 21154 / JCM 14090 / 6A8).